The sequence spans 580 residues: Trafficking protein particle complex subunit 14 (580 aa).

Disordered regions lie at residues 90 to 138 and 480 to 533; these read GMPG…ATTL and VSHP…RSGS. Residues 105–116 show a composition bias toward gly residues; it reads PGGGDPGGGGLF. Over residues 124-137 the composition is skewed to low complexity; sequence THGPGPATSGGATT. Position 491 is a phosphoserine (Ser491). Over residues 492–502 the composition is skewed to low complexity; it reads RKSSPSSPAVR. Over residues 512–525 the composition is skewed to polar residues; sequence LGRSQSFSHQQPSR. Residue Ser517 is modified to Phosphoserine. At Thr541 the chain carries Phosphothreonine. Ser546 carries the post-translational modification Phosphoserine.

Component of the multisubunit TRAPP II complex, which includes at least TRAPPC1, TRAPPC2, TRAPPC2L, TRAPPC3, TRAPPC4, TRAPPC5, TRAPPC6A/B, TRAPPC9, TRAPPC10 and TRAPPC14. TRAPPC9, TRAPPC10 and TRAPPC14 are specific subunits of the TRAPP II complex. Interacts with alpha-tubulin during mitosis. Interacts with RAB3IP (via the N-terminal region); this interaction mediates RAB3IP association with the TRAPP II complex. Interacts with TRAPPC10. Interacts with FBF1. In terms of tissue distribution, broadly expressed. High levels in brain, cerebellum, testis and whole blood.

The protein localises to the cytoplasm. The protein resides in the cytoskeleton. It localises to the spindle. Its subcellular location is the vesicle. It is found in the midbody. Functionally, specific subunit of the TRAPP (transport protein particle) II complex, a highly conserved vesicle tethering complex that functions in late Golgi trafficking as a membrane tether. TRAPP II complex also has GEF activity toward RAB1A. TRAPPC14 is dispensable for TRAPPII complex integrity but mediates RAB3IP preciliary vesicle trafficking to the mother centriole during ciliogenesis. Modulates YAP1 activity as transcriptional regulator. The chain is Trafficking protein particle complex subunit 14 from Homo sapiens (Human).